The following is a 151-amino-acid chain: D-aminoacyl-tRNA deacylase (151 aa).

The short motif at 137–138 is the Gly-cisPro motif, important for rejection of L-amino acids element; sequence GP.

This sequence belongs to the DTD family. Homodimer.

It localises to the cytoplasm. The catalysed reaction is glycyl-tRNA(Ala) + H2O = tRNA(Ala) + glycine + H(+). It catalyses the reaction a D-aminoacyl-tRNA + H2O = a tRNA + a D-alpha-amino acid + H(+). In terms of biological role, an aminoacyl-tRNA editing enzyme that deacylates mischarged D-aminoacyl-tRNAs. Also deacylates mischarged glycyl-tRNA(Ala), protecting cells against glycine mischarging by AlaRS. Acts via tRNA-based rather than protein-based catalysis; rejects L-amino acids rather than detecting D-amino acids in the active site. By recycling D-aminoacyl-tRNA to D-amino acids and free tRNA molecules, this enzyme counteracts the toxicity associated with the formation of D-aminoacyl-tRNA entities in vivo and helps enforce protein L-homochirality. This chain is D-aminoacyl-tRNA deacylase, found in Solibacter usitatus (strain Ellin6076).